Reading from the N-terminus, the 317-residue chain is Ribosomal protein L11 methyltransferase (317 aa).

Positions 158, 179, 201, and 244 each coordinate S-adenosyl-L-methionine.

This sequence belongs to the methyltransferase superfamily. PrmA family.

It localises to the cytoplasm. It catalyses the reaction L-lysyl-[protein] + 3 S-adenosyl-L-methionine = N(6),N(6),N(6)-trimethyl-L-lysyl-[protein] + 3 S-adenosyl-L-homocysteine + 3 H(+). Its function is as follows. Methylates ribosomal protein L11. The chain is Ribosomal protein L11 methyltransferase from Streptococcus pyogenes serotype M1.